The sequence spans 277 residues: ATP synthase subunit delta (277 aa).

This sequence belongs to the ATPase delta chain family. F-type ATPases have 2 components, F(1) - the catalytic core - and F(0) - the membrane proton channel. F(1) has five subunits: alpha(3), beta(3), gamma(1), delta(1), epsilon(1). F(0) has three main subunits: a(1), b(2) and c(10-14). The alpha and beta chains form an alternating ring which encloses part of the gamma chain. F(1) is attached to F(0) by a central stalk formed by the gamma and epsilon chains, while a peripheral stalk is formed by the delta and b chains.

It localises to the cell membrane. Functionally, f(1)F(0) ATP synthase produces ATP from ADP in the presence of a proton or sodium gradient. F-type ATPases consist of two structural domains, F(1) containing the extramembraneous catalytic core and F(0) containing the membrane proton channel, linked together by a central stalk and a peripheral stalk. During catalysis, ATP synthesis in the catalytic domain of F(1) is coupled via a rotary mechanism of the central stalk subunits to proton translocation. In terms of biological role, this protein is part of the stalk that links CF(0) to CF(1). It either transmits conformational changes from CF(0) to CF(1) or is implicated in proton conduction. The sequence is that of ATP synthase subunit delta from Bifidobacterium animalis subsp. lactis (strain AD011).